Here is a 64-residue protein sequence, read N- to C-terminus: Large ribosomal subunit protein bL35 (64 aa).

The protein belongs to the bacterial ribosomal protein bL35 family.

This chain is Large ribosomal subunit protein bL35, found in Streptomyces avermitilis (strain ATCC 31267 / DSM 46492 / JCM 5070 / NBRC 14893 / NCIMB 12804 / NRRL 8165 / MA-4680).